The chain runs to 267 residues: tRNA pseudouridine synthase A (267 aa).

Aspartate 54 functions as the Nucleophile in the catalytic mechanism. Tyrosine 114 provides a ligand contact to substrate.

It belongs to the tRNA pseudouridine synthase TruA family. In terms of assembly, homodimer.

The enzyme catalyses uridine(38/39/40) in tRNA = pseudouridine(38/39/40) in tRNA. Formation of pseudouridine at positions 38, 39 and 40 in the anticodon stem and loop of transfer RNAs. This Tropheryma whipplei (strain Twist) (Whipple's bacillus) protein is tRNA pseudouridine synthase A.